The following is a 76-amino-acid chain: MKREKGRRGKKRICNFCVDKAEVVDYKDVQRLKKYITERGKILPRRISGNCAKHQRLLTTAIKRARNIALLPFTAE.

Belongs to the bacterial ribosomal protein bS18 family. Part of the 30S ribosomal subunit. Forms a tight heterodimer with protein bS6.

In terms of biological role, binds as a heterodimer with protein bS6 to the central domain of the 16S rRNA, where it helps stabilize the platform of the 30S subunit. This is Small ribosomal subunit protein bS18 from Pelotomaculum thermopropionicum (strain DSM 13744 / JCM 10971 / SI).